The sequence spans 203 residues: UPF0637 protein MCCL_0722 (203 aa).

Belongs to the UPF0637 family.

The polypeptide is UPF0637 protein MCCL_0722 (Macrococcus caseolyticus (strain JCSC5402) (Macrococcoides caseolyticum)).